The following is a 259-amino-acid chain: Protein-L-isoaspartate O-methyltransferase 1 (259 aa).

Ser109 is a catalytic residue.

The protein belongs to the methyltransferase superfamily. L-isoaspartyl/D-aspartyl protein methyltransferase family.

Its subcellular location is the cytoplasm. The catalysed reaction is [protein]-L-isoaspartate + S-adenosyl-L-methionine = [protein]-L-isoaspartate alpha-methyl ester + S-adenosyl-L-homocysteine. Its function is as follows. Catalyzes the methyl esterification of L-isoaspartyl residues in peptides and proteins that result from spontaneous decomposition of normal L-aspartyl and L-asparaginyl residues. It plays a role in the repair and/or degradation of damaged proteins. This chain is Protein-L-isoaspartate O-methyltransferase 1, found in Cupriavidus necator (strain ATCC 17699 / DSM 428 / KCTC 22496 / NCIMB 10442 / H16 / Stanier 337) (Ralstonia eutropha).